The primary structure comprises 673 residues: MLKLFSAFRKDKIWDFDGGIHPPEMKTQSNGTPLRQVPLAPRFVIPLKQHIGAEGELCVSVGDRVLRGQALTRGRGRMLPVHAPTSGTVIAIAPHSTAHPSALAELSVIIDADGEDRWIEREGWSDYRAHSREALIERIHQYGVAGLGGAGFPTGVKLQGGGDKITTLIINAAECEPYITADDRLMQDCAAQIVEGIRILAHILQPREVLIGIEDNKPQAISMLRAVLADAHDISLRVIPTKYPSGGAKQLTQILTGKQVPHGGRSSDIGVLMQNVGTAYAVKRAVVDGEPITERVVTLTGEAVSRPGNVWARLGTPVRHLLNDAGFCPSADQMVIMGGPLMGFTLPWLDVPVVKITNCLLAPSVTEMGAPQEEKSCIRCSACADACPADLLPQQLYWFSKGQQHDKATAHHIADCIECGACAWVCPSNIPLVQYFRQEKAEINAIRLEEKRAAEAKARFEARQARLEREKAARLARHKSAAVQPAAKDQDAIAAALARVKEKQAQATQPVVIQAGSLPDNSAVIEAREARKAQARAKQAAHPVADSAISGGAPRKAAVEAAIARAKARKQEQQAGSEPAEPVDPRKAAVEAAIARAKARKQEQQAGSEPAEPVDPRKAAVEAAIARAKARKQEQQAGSEPAEPADPRKAAVAAAIARVQAKKAAQQQVVNED.

2 4Fe-4S ferredoxin-type domains span residues 368-397 (MGAP…QQLY) and 407-436 (KATA…VQYF). Positions 377, 380, 383, 387, 416, 419, 422, and 426 each coordinate [4Fe-4S] cluster. 2 disordered regions span residues 534 to 553 (QARA…SGGA) and 563 to 653 (IARA…AAVA).

This sequence belongs to the 4Fe4S bacterial-type ferredoxin family. RnfC subfamily. As to quaternary structure, the complex is composed of six subunits: RsxA, RsxB, RsxC, RsxD, RsxE and RsxG. [4Fe-4S] cluster is required as a cofactor.

The protein localises to the cell inner membrane. Functionally, part of a membrane-bound complex that couples electron transfer with translocation of ions across the membrane. Required to maintain the reduced state of SoxR. The chain is Ion-translocating oxidoreductase complex subunit C from Salmonella gallinarum (strain 287/91 / NCTC 13346).